We begin with the raw amino-acid sequence, 552 residues long: Dihydroxy-acid dehydratase (552 aa).

Mg(2+) is bound at residue Asp-78. [2Fe-2S] cluster is bound at residue Cys-119. Asp-120 and Lys-121 together coordinate Mg(2+). Lys-121 is subject to N6-carboxylysine. Cys-191 serves as a coordination point for [2Fe-2S] cluster. Glu-442 serves as a coordination point for Mg(2+). The active-site Proton acceptor is the Ser-468.

Belongs to the IlvD/Edd family. As to quaternary structure, homodimer. [2Fe-2S] cluster is required as a cofactor. The cofactor is Mg(2+).

The catalysed reaction is (2R)-2,3-dihydroxy-3-methylbutanoate = 3-methyl-2-oxobutanoate + H2O. It carries out the reaction (2R,3R)-2,3-dihydroxy-3-methylpentanoate = (S)-3-methyl-2-oxopentanoate + H2O. Its pathway is amino-acid biosynthesis; L-isoleucine biosynthesis; L-isoleucine from 2-oxobutanoate: step 3/4. The protein operates within amino-acid biosynthesis; L-valine biosynthesis; L-valine from pyruvate: step 3/4. In terms of biological role, functions in the biosynthesis of branched-chain amino acids. Catalyzes the dehydration of (2R,3R)-2,3-dihydroxy-3-methylpentanoate (2,3-dihydroxy-3-methylvalerate) into 2-oxo-3-methylpentanoate (2-oxo-3-methylvalerate) and of (2R)-2,3-dihydroxy-3-methylbutanoate (2,3-dihydroxyisovalerate) into 2-oxo-3-methylbutanoate (2-oxoisovalerate), the penultimate precursor to L-isoleucine and L-valine, respectively. The polypeptide is Dihydroxy-acid dehydratase (Clostridium botulinum (strain Alaska E43 / Type E3)).